The primary structure comprises 88 residues: Small ribosomal subunit protein uS15 (88 aa).

Belongs to the universal ribosomal protein uS15 family. As to quaternary structure, part of the 30S ribosomal subunit. Forms a bridge to the 50S subunit in the 70S ribosome, contacting the 23S rRNA.

In terms of biological role, one of the primary rRNA binding proteins, it binds directly to 16S rRNA where it helps nucleate assembly of the platform of the 30S subunit by binding and bridging several RNA helices of the 16S rRNA. Forms an intersubunit bridge (bridge B4) with the 23S rRNA of the 50S subunit in the ribosome. This chain is Small ribosomal subunit protein uS15, found in Albidiferax ferrireducens (strain ATCC BAA-621 / DSM 15236 / T118) (Rhodoferax ferrireducens).